Consider the following 415-residue polypeptide: Isocitrate dehydrogenase [NADP] (415 aa).

NADP(+) contacts are provided by residues 77-79 (TIT) and R84. Position 79 (T79) interacts with substrate. Substrate-binding positions include 96–102 (SPNGTIR), R111, and R134. D254 lines the Mn(2+) pocket. NADP(+) is bound at residue K262. D277 contributes to the Mn(2+) binding site. NADP(+) is bound by residues 312–317 (GTVTRH) and N330.

It belongs to the isocitrate and isopropylmalate dehydrogenases family. Heterodimer. Requires Mg(2+) as cofactor. Mn(2+) serves as cofactor.

The protein resides in the cytoplasm. It catalyses the reaction D-threo-isocitrate + NADP(+) = 2-oxoglutarate + CO2 + NADPH. Its function is as follows. May supply 2-oxoglutarate for amino acid biosynthesis and ammonia assimilation via the glutamine synthetase/glutamate synthase (GS/GOGAT) pathway. The sequence is that of Isocitrate dehydrogenase [NADP] from Nicotiana tabacum (Common tobacco).